We begin with the raw amino-acid sequence, 353 residues long: O-antigen chain mannosyltransferase RfbU (353 aa).

It belongs to the glycosyltransferase group 1 family. Glycosyltransferase 4 subfamily.

It carries out the reaction alpha-L-rhamnosyl-(1-&gt;3)-alpha-D-galactosyl-1-diphospho-di-trans,octa-cis-undecaprenol + GDP-alpha-D-mannose = alpha-D-Man-(1-&gt;4)-alpha-L-Rha-(1-&gt;3)-alpha-D-Gal-di-trans,octa-cis-undecaprenyl diphosphate + GDP + H(+). The protein operates within bacterial outer membrane biogenesis; LPS O-antigen biosynthesis. Mannosyltransferase involved in the biosynthesis of the repeat unit of the lipopolysaccharide (LPS) O-antigen region. Catalyzes the addition of a mannose to the rhamnosyl-galactosyl-undecaprenyl diphosphate intermediate. This Salmonella typhimurium (strain LT2 / SGSC1412 / ATCC 700720) protein is O-antigen chain mannosyltransferase RfbU.